An 865-amino-acid chain; its full sequence is Xylosyltransferase 2 (865 aa).

Residues 1 to 15 lie on the Cytoplasmic side of the membrane; that stretch reads MVASARVQKLVRRYK. A helical; Signal-anchor for type II membrane protein transmembrane segment spans residues 16–36; that stretch reads LAIATALAILLLQGLVVWSFS. Topologically, residues 37–865 are lumenal; sequence GLEEDEPGEK…GPVKADGRLR (829 aa). A disordered region spans residues 39-155; the sequence is EEDEPGEKGR…SVEGAPQPTD (117 aa). Positions 53-65 are enriched in basic and acidic residues; it reads RPLDPGEGSKDTD. Positions 73-82 are enriched in basic residues; sequence SAGRRHGRWR. N-linked (GlcNAc...) asparagine glycosylation occurs at N122. 4 disulfides stabilise this stretch: C162–C190, C206–C448, C467–C480, and C469–C478. Residues V239, D267, and 296–298 each bind UDP-alpha-D-xylose; that span reads TIW. N327 is a glycosylation site (N-linked (GlcNAc...) asparagine). A UDP-alpha-D-xylose-binding site is contributed by 400-401; it reads DW. UDP-alpha-D-xylose-binding positions include S481 and 504-505; that span reads RK. 2 disulfide bridges follow: C581/C833 and C826/C839. A glycan (N-linked (GlcNAc...) asparagine) is linked at N683.

The protein belongs to the glycosyltransferase 14 family. XylT subfamily. In terms of assembly, monomer. The cofactor is Mg(2+). Mn(2+) serves as cofactor. Post-translationally, contains disulfide bonds. Detected in brain, liver, lung, kidney, heart, spleen and testis, and at lower levels in skeletal muscle.

It is found in the golgi apparatus membrane. The protein localises to the secreted. It catalyses the reaction UDP-alpha-D-xylose + L-seryl-[protein] = 3-O-(beta-D-xylosyl)-L-seryl-[protein] + UDP + H(+). Its pathway is glycan metabolism; chondroitin sulfate biosynthesis. The protein operates within glycan metabolism; heparan sulfate biosynthesis. In terms of biological role, catalyzes the first step in the biosynthesis of chondroitin sulfate, heparan sulfate and dermatan sulfate proteoglycans, such as DCN. Transfers D-xylose from UDP-D-xylose to specific serine residues of the core protein. This chain is Xylosyltransferase 2 (Xylt2), found in Mus musculus (Mouse).